We begin with the raw amino-acid sequence, 317 residues long: UV DNA damage endonuclease (317 aa).

This sequence belongs to the uve1/UvsE family.

Its function is as follows. Component in a DNA repair pathway. Removal of UV LIGHT damaged nucleotides. Recognizes pyrimidine dimers and cleave a phosphodiester bond immediately 5' to the lesion. In Bacillus mycoides (strain KBAB4) (Bacillus weihenstephanensis), this protein is UV DNA damage endonuclease.